Reading from the N-terminus, the 86-residue chain is Large ribosomal subunit protein uL23 (86 aa).

Belongs to the universal ribosomal protein uL23 family. As to quaternary structure, part of the 50S ribosomal subunit. Contacts protein L29.

Its function is as follows. Binds to 23S rRNA. One of the proteins that surrounds the polypeptide exit tunnel on the outside of the ribosome. The polypeptide is Large ribosomal subunit protein uL23 (Methanosphaera stadtmanae (strain ATCC 43021 / DSM 3091 / JCM 11832 / MCB-3)).